The sequence spans 235 residues: Serine protease SplA (235 aa).

The N-terminal stretch at 1 to 35 (MNENVMVKGLTALTILTSLGFAENISNQPHSIAKA) is a signal peptide. Catalysis depends on charge relay system residues histidine 74, aspartate 113, and serine 189.

Belongs to the peptidase S1B family.

It localises to the secreted. The protein is Serine protease SplA (splA) of Staphylococcus aureus (strain MSSA476).